The sequence spans 139 residues: ATP synthase epsilon chain (139 aa).

It belongs to the ATPase epsilon chain family. F-type ATPases have 2 components, CF(1) - the catalytic core - and CF(0) - the membrane proton channel. CF(1) has five subunits: alpha(3), beta(3), gamma(1), delta(1), epsilon(1). CF(0) has three main subunits: a, b and c.

The protein resides in the cell membrane. Its function is as follows. Produces ATP from ADP in the presence of a proton gradient across the membrane. This is ATP synthase epsilon chain from Streptococcus pneumoniae serotype 2 (strain D39 / NCTC 7466).